The chain runs to 84 residues: Small ribosomal subunit protein uS17 (84 aa).

Belongs to the universal ribosomal protein uS17 family. In terms of assembly, part of the 30S ribosomal subunit.

One of the primary rRNA binding proteins, it binds specifically to the 5'-end of 16S ribosomal RNA. This chain is Small ribosomal subunit protein uS17, found in Porphyromonas gingivalis (strain ATCC 33277 / DSM 20709 / CIP 103683 / JCM 12257 / NCTC 11834 / 2561).